The primary structure comprises 260 residues: MRAFWQELEAGPVLQVHQAGEVPYRRAWAWQQVRLAQMIRDPQVPDGLLLLTHPPVYTLGAGADPKFLKSLAGQIGSPDTQPESPVTEGPEILRVERGGEVTYHGPGQWVGYALLNLKRHRTVYGSHGQPDLHRYLRHLEEVLIQTVAHFGLQGERIPGLTGVWVQGHKVAAIGIKVSRWVTYHGFALNVCPDLAAFQAIVPCGIPDRPVGSLVHFCPEVTMAAVAPVLVKSFCQVFGLQAQEVSLSEWLGERKSLKTQG.

The BPL/LPL catalytic domain occupies 42–241; it reads PQVPDGLLLL…SFCQVFGLQA (200 aa). Substrate is bound by residues 97–104, 172–174, and 185–187; these read RGGEVTYH, AIG, and GFA. The Acyl-thioester intermediate role is filled by Cys-203.

Belongs to the LipB family.

It is found in the cytoplasm. The catalysed reaction is octanoyl-[ACP] + L-lysyl-[protein] = N(6)-octanoyl-L-lysyl-[protein] + holo-[ACP] + H(+). The protein operates within protein modification; protein lipoylation via endogenous pathway; protein N(6)-(lipoyl)lysine from octanoyl-[acyl-carrier-protein]: step 1/2. Functionally, catalyzes the transfer of endogenously produced octanoic acid from octanoyl-acyl-carrier-protein onto the lipoyl domains of lipoate-dependent enzymes. Lipoyl-ACP can also act as a substrate although octanoyl-ACP is likely to be the physiological substrate. This chain is Octanoyltransferase, found in Synechococcus sp. (strain JA-3-3Ab) (Cyanobacteria bacterium Yellowstone A-Prime).